A 73-amino-acid polypeptide reads, in one-letter code: uncharacterized protein (73 aa).

The next 2 membrane-spanning stretches (helical) occupy residues 7–27 and 47–67; these read LFSSLTFSLTVLFLLLLIPNL and YFGYPSLGILFAGILSPIIIL.

It is found in the cell membrane. This is an uncharacterized protein from Methanocaldococcus jannaschii (strain ATCC 43067 / DSM 2661 / JAL-1 / JCM 10045 / NBRC 100440) (Methanococcus jannaschii).